A 428-amino-acid polypeptide reads, in one-letter code: C4-dicarboxylate transport protein (428 aa).

The next 8 helical transmembrane spans lie at 8–28 (SLYF…HFYP), 44–64 (LIKM…IAGM), 76–96 (VALL…LIIV), 142–162 (IGAF…LFGF), 184–206 (VIFG…AMAF), 222–242 (LIIC…GSIA), 326–346 (IVHQ…AAGV), and 352–372 (IVLA…LALI).

Belongs to the dicarboxylate/amino acid:cation symporter (DAACS) (TC 2.A.23) family.

Its subcellular location is the cell inner membrane. Its function is as follows. Responsible for the transport of dicarboxylates such as succinate, fumarate, and malate from the periplasm across the membrane. This Shigella flexneri protein is C4-dicarboxylate transport protein.